A 233-amino-acid chain; its full sequence is Large ribosomal subunit protein uL1 (233 aa).

The protein belongs to the universal ribosomal protein uL1 family. As to quaternary structure, part of the 50S ribosomal subunit.

Its function is as follows. Binds directly to 23S rRNA. The L1 stalk is quite mobile in the ribosome, and is involved in E site tRNA release. In terms of biological role, protein L1 is also a translational repressor protein, it controls the translation of the L11 operon by binding to its mRNA. The sequence is that of Large ribosomal subunit protein uL1 from Shewanella piezotolerans (strain WP3 / JCM 13877).